Reading from the N-terminus, the 250-residue chain is S-adenosyl-L-methionine-dependent 2-deoxy-scyllo-inosamine dehydrogenase (250 aa).

The [4Fe-4S] cluster site is built by C16, C20, C23, C169, C187, and E223.

The protein belongs to the radical SAM superfamily. Requires [4Fe-4S] cluster as cofactor.

The enzyme catalyses 2-deoxy-scyllo-inosamine + S-adenosyl-L-methionine = 3-amino-2,3-dideoxy-scyllo-inosose + 5'-deoxyadenosine + L-methionine + H(+). It participates in antibiotic biosynthesis; butirosin biosynthesis. Functionally, catalyzes the radical S-adenosyl-L-methionine (SAM)-dependent two-electron oxidation of 2-deoxy-scyllo-inosamine (DOIA) to amino-dideoxy-scyllo-inosose (amino-DOI) in the biosynthetic pathway of butirosin. The polypeptide is S-adenosyl-L-methionine-dependent 2-deoxy-scyllo-inosamine dehydrogenase (btrN) (Niallia circulans (Bacillus circulans)).